A 1083-amino-acid chain; its full sequence is Solute carrier family 12 member 7 (1083 aa).

Residues 1 to 52 (MPTNFTVVPVEAHADGGGDETAERTEAPGTPEGPEPERPSPGDGNPRENSPF) form a disordered region. Over 1–119 (MPTNFTVVPV…RREAKAPRMG (119 aa)) the chain is Cytoplasmic. Residues 12–26 (AHADGGGDETAERTE) show a composition bias toward basic and acidic residues. At Thr-30 the chain carries Phosphothreonine. 2 positions are modified to phosphoserine: Ser-50 and Ser-62. Residues 120–142 (TFIGVYLPCLQNILGVILFLRLT) traverse the membrane as a discontinuously helical segment. K(+) is bound by residues Asn-131 and Ile-132. Residue Val-135 coordinates chloride. At 143 to 149 (WIVGVAG) the chain is on the extracellular side. Residues 150–172 (VLESFLIVAMCCTCTMLTAISMS) traverse the membrane as a helical segment. The Cytoplasmic segment spans residues 173–196 (AIATNGVVPAGGSYYMISRSLGPE). A helical transmembrane segment spans residues 197 to 225 (FGGAVGLCFYLGTTFAGAMYILGTIEIFL). The Extracellular portion of the chain corresponds to 226–249 (TYISPGAAIFQAEAAGGEAAAMLH). 2 helical membrane-spanning segments follow: residues 250–270 (NMRV…FVGV) and 272–300 (YVNK…KSAF). Residues 301 to 419 (DPPDIPVCLL…PYVLTDIAAS (119 aa)) lie on the Extracellular side of the membrane. Disulfide bonds link Cys-308–Cys-323 and Cys-343–Cys-352. The N-linked (GlcNAc...) asparagine glycan is linked to Asn-312. N-linked (GlcNAc...) asparagine glycosylation is present at Asn-360. A helical membrane pass occupies residues 420–440 (FTLLVGIYFPSVTGIMAGSNR). K(+) is bound by residues Pro-429 and Thr-432. Residue Pro-429 coordinates chloride. Chloride-binding residues include Gly-433 and Ile-434. The Cytoplasmic segment spans residues 441-450 (SGDLKDAQKS). A helical transmembrane segment spans residues 451–473 (IPTGTILAIVTTSFIYLSCIVLF). The Extracellular segment spans residues 474–504 (GACIEGVVLRDKFGEALQGNLVIGMLAWPSP). Residues 505–531 (WVIVIGSFFSTCGAGLQSLTGAPRLLQ) form a helical membrane-spanning segment. The Cytoplasmic segment spans residues 532-554 (AIARDGIVPFLQVFGHGKANGEP). 2 helical membrane passes run 555–571 (TWAL…GILI) and 574–598 (LDSV…ACAV). Residue Tyr-589 participates in chloride binding. The Cytoplasmic segment spans residues 599–612 (QTLLRTPNWRPRFK). 2 consecutive transmembrane segments (helical) span residues 613 to 632 (FYHW…LMFI) and 636 to 651 (YYAL…IYKY). Topologically, residues 652–1083 (IEYRGAEKEW…GGREVITIYS (432 aa)) are cytoplasmic. The interval 664–680 (GIRGLSLNAARYALLRV) is scissor helix. Phosphothreonine is present on residues Thr-973 and Thr-980.

The protein belongs to the SLC12A transporter family. K/Cl co-transporter subfamily. As to quaternary structure, homodimer; adopts a domain-swap conformation at the scissor helices connecting the transmembrane domain and C-terminal domain. Heterodimer with K-Cl cotransporter SLC12A5. Detected in muscle, brain, lung, heart and kidney.

Its subcellular location is the cell membrane. It carries out the reaction K(+)(in) + chloride(in) = K(+)(out) + chloride(out). Activated by N-ethylmaleimide (NEM). Inhibited by furosemide, DIDS and bumetanide. The inhibition is much stronger in the presence of 50 mM K(+) in the uptake medium. Inhibited by DIOA. Inhibited by WNK3. Its function is as follows. Mediates electroneutral potassium-chloride cotransport when activated by cell swelling. May mediate K(+) uptake into Deiters' cells in the cochlea and contribute to K(+) recycling in the inner ear. Important for the survival of cochlear outer and inner hair cells and the maintenance of the organ of Corti. May be required for basolateral Cl(-) extrusion in the kidney and contribute to renal acidification. The protein is Solute carrier family 12 member 7 of Homo sapiens (Human).